A 504-amino-acid chain; its full sequence is Maturase K (504 aa).

Belongs to the intron maturase 2 family. MatK subfamily.

The protein localises to the plastid. Its subcellular location is the chloroplast. Its function is as follows. Usually encoded in the trnK tRNA gene intron. Probably assists in splicing its own and other chloroplast group II introns. The chain is Maturase K from Adenostoma fasciculatum (Chamise).